The following is a 417-amino-acid chain: D-galactonate dehydratase family member Dd703_0947 (417 aa).

Substrate is bound at residue His-127. The Proton donor/acceptor role is filled by Tyr-158. Mg(2+) is bound at residue Asp-223. Residue His-225 is the Proton donor/acceptor of the active site. The Mg(2+) site is built by Glu-249 and Glu-275. Substrate contacts are provided by Glu-275, Arg-296, His-325, Asp-329, and Glu-352.

Belongs to the mandelate racemase/muconate lactonizing enzyme family. GalD subfamily. The cofactor is Mg(2+).

The catalysed reaction is D-mannonate = 2-dehydro-3-deoxy-D-gluconate + H2O. It carries out the reaction D-gluconate = 2-dehydro-3-deoxy-D-gluconate + H2O. In terms of biological role, has low dehydratase activity with D-mannonate and D-gluconate, suggesting that these are not physiological substrates and that it has no significant role in the in vivo degradation of these compounds. Has no detectable activity with a panel of 70 other acid sugars (in vitro). This chain is D-galactonate dehydratase family member Dd703_0947, found in Musicola paradisiaca (strain Ech703) (Dickeya paradisiaca).